A 1054-amino-acid polypeptide reads, in one-letter code: MTEAVGGVYPLVDMTGGSSRFPEMEENVLDFWKRDDTFQASIDQRNDAEDYVFYDGPPFANGLPHYGHLLTGYVKDIVPRYQTMRGYRVPRVFGWDTHGLPAELEAEKQLGIKDKGEIESMGLAQFNDYCAKSVLQYTKEWEEYVTRQARWVDFENGYKTMDLTYMESVIWAFKELYDKGLIYQGFRVLPYSWAEHTPLSNQETRLDDSYKMRQDPTLTVTMPITGKIEGTGANEALIGANAIAWTTTPWTLPSNLALAVNPSVTYALVEVAGDGEEGFVGQQLLLARDLVGAYAKELGTDARIISEHPGTELIGLTYEPVFDFFRDHPNAFQILGADYVTTEDGTGIVHQAPAFGEDDMNVCNAADIAPVIPVDMDGKFTSLTPEYEGQLVFDANKDIIRDLKAKGRVFRHQTIEHSYPHSWRSGEPLIYMALPSWFVNVTKIRDRMVETNQDIEWMPAHIRDGQFGKWLEGARDWNISRSRYWGSPIPVWVSDDENYPRVDVYGSLDELEADFGVRPTSLHRPYIDELTRPNPDDPTGKSTMRRVPDVLDVWFDSGSMPFAQVHYPFENKDWFDTHAPADFIVEYIGQTRGWFYLLHVLSVGLFDRPAFKKVVAHGIVLGDDGLKMSKSKGNYPNVTEVFDRDGSDAMRWFLMSSPILRGGNLIVTEKGIREGVRQAQLPMWNAYSFLQLYASKKATWSVDSTDVLDRYILAKLHDLVADVTAALDATDIARACDQVRWFCDALTNWYVRRSRDRFWAGDEAHPEAFNTLYTVLETLTRVAAPLLPMTTEVIWRGLTGERSVHLTDFPSADSFPADADLVRTMDEIRGVCSAASSIRKAHKLRNRLPLPNLTVALPDSGRLADFLSIIRDEVNVKNVDLTSDVDAVGTFEVVVNAKVAGPRLGKDVQRVIKAVKAGNYERVGETVVADGIELQDGEYTERLVAANPDSTAQIDDVDGLVVLDMEVTPELEAEGWAADVIRGLQDARKSSGFEVSDRIQVTLSVPGDKQEWATRHADHIAGEVLATSFEVTQDDLGEDAHEVLKGVTASVARV.

Positions 58–68 match the 'HIGH' region motif; the sequence is PFANGLPHYGH. Residues 627–631 carry the 'KMSKS' region motif; sequence KMSKS. Lys630 is a binding site for ATP.

This sequence belongs to the class-I aminoacyl-tRNA synthetase family. IleS type 2 subfamily. As to quaternary structure, monomer. Requires Zn(2+) as cofactor.

It localises to the cytoplasm. The enzyme catalyses tRNA(Ile) + L-isoleucine + ATP = L-isoleucyl-tRNA(Ile) + AMP + diphosphate. In terms of biological role, catalyzes the attachment of isoleucine to tRNA(Ile). As IleRS can inadvertently accommodate and process structurally similar amino acids such as valine, to avoid such errors it has two additional distinct tRNA(Ile)-dependent editing activities. One activity is designated as 'pretransfer' editing and involves the hydrolysis of activated Val-AMP. The other activity is designated 'posttransfer' editing and involves deacylation of mischarged Val-tRNA(Ile). The protein is Isoleucine--tRNA ligase of Corynebacterium efficiens (strain DSM 44549 / YS-314 / AJ 12310 / JCM 11189 / NBRC 100395).